Here is a 179-residue protein sequence, read N- to C-terminus: Replication restart protein DnaT (179 aa).

The interval 1–83 is required for trimerization and to bind PriB; that stretch reads MSSRILTSHF…FEEPAAAPVA (83 aa). A binds ssDNA region spans residues 84–179; the sequence is VPMGKFAMYA…DSHIPRGFRG (96 aa). The segment at 151–179 is disordered; sequence SRASNGGQPKRDVNSVSEPDSHIPRGFRG. Basic and acidic residues predominate over residues 159-173; the sequence is PKRDVNSVSEPDSHI.

The protein belongs to the DnaT family. As to quaternary structure, homotrimer. Interacts with PriB. Interacts with PriC. Component of the replication restart primosome. Primosome assembly occurs via a 'hand-off' mechanism. PriA binds to replication forks, subsequently PriB then DnaT bind; DnaT then displaces ssDNA to generate the helicase loading substrate.

In terms of biological role, involved in the restart of stalled replication forks, which reloads the replicative helicase on sites other than the origin of replication. Can function in multiple replication restart pathways. Displaces ssDNA from a PriB-ssDNA complex. Probably forms a spiral filament on ssDNA. Its function is as follows. Binds single-stranded (ss)DNA. The minimal binding site is about 26 +/- 2 nucleotides (nt) per trimer. Two DNA-protein complexes are seen with 55 nt-long ssDNA. This chain is Replication restart protein DnaT, found in Klebsiella pneumoniae subsp. pneumoniae (strain ATCC 700721 / MGH 78578).